A 111-amino-acid polypeptide reads, in one-letter code: Ribosome-binding factor A (111 aa).

Belongs to the RbfA family. Monomer. Binds 30S ribosomal subunits, but not 50S ribosomal subunits or 70S ribosomes.

Its subcellular location is the cytoplasm. Functionally, one of several proteins that assist in the late maturation steps of the functional core of the 30S ribosomal subunit. Associates with free 30S ribosomal subunits (but not with 30S subunits that are part of 70S ribosomes or polysomes). Required for efficient processing of 16S rRNA. May interact with the 5'-terminal helix region of 16S rRNA. The sequence is that of Ribosome-binding factor A from Helicobacter pylori (strain G27).